A 167-amino-acid polypeptide reads, in one-letter code: Peptide deformylase (167 aa).

Cys91 and His133 together coordinate Fe cation. Glu134 is an active-site residue. A Fe cation-binding site is contributed by His137.

Belongs to the polypeptide deformylase family. The cofactor is Fe(2+).

It carries out the reaction N-terminal N-formyl-L-methionyl-[peptide] + H2O = N-terminal L-methionyl-[peptide] + formate. Removes the formyl group from the N-terminal Met of newly synthesized proteins. Requires at least a dipeptide for an efficient rate of reaction. N-terminal L-methionine is a prerequisite for activity but the enzyme has broad specificity at other positions. This Nitrosococcus oceani (strain ATCC 19707 / BCRC 17464 / JCM 30415 / NCIMB 11848 / C-107) protein is Peptide deformylase.